Reading from the N-terminus, the 511-residue chain is Phosphoenolpyruvate carboxylase (511 aa).

Belongs to the PEPCase type 2 family. As to quaternary structure, homotetramer. Mg(2+) serves as cofactor.

The enzyme catalyses oxaloacetate + phosphate = phosphoenolpyruvate + hydrogencarbonate. Functionally, catalyzes the irreversible beta-carboxylation of phosphoenolpyruvate (PEP) to form oxaloacetate (OAA), a four-carbon dicarboxylic acid source for the tricarboxylic acid cycle. This is Phosphoenolpyruvate carboxylase from Saccharolobus islandicus (strain Y.N.15.51 / Yellowstone #2) (Sulfolobus islandicus).